Here is a 109-residue protein sequence, read N- to C-terminus: Iron-sulfur cluster assembly protein CyaY (109 aa).

It belongs to the frataxin family.

Involved in iron-sulfur (Fe-S) cluster assembly. May act as a regulator of Fe-S biogenesis. The chain is Iron-sulfur cluster assembly protein CyaY from Verminephrobacter eiseniae (strain EF01-2).